The primary structure comprises 863 residues: Leucine--tRNA ligase (863 aa).

Residues 42–52 (PYPSGRLHMGH) carry the 'HIGH' region motif. The 'KMSKS' region signature appears at 618-622 (KMSKS). Residue Lys-621 coordinates ATP.

The protein belongs to the class-I aminoacyl-tRNA synthetase family.

It localises to the cytoplasm. It carries out the reaction tRNA(Leu) + L-leucine + ATP = L-leucyl-tRNA(Leu) + AMP + diphosphate. The protein is Leucine--tRNA ligase of Colwellia psychrerythraea (strain 34H / ATCC BAA-681) (Vibrio psychroerythus).